A 541-amino-acid chain; its full sequence is Glucose-6-phosphate isomerase (541 aa).

Glu346 (proton donor) is an active-site residue. Active-site residues include His377 and Lys506.

It belongs to the GPI family.

The protein localises to the cytoplasm. The catalysed reaction is alpha-D-glucose 6-phosphate = beta-D-fructose 6-phosphate. Its pathway is carbohydrate biosynthesis; gluconeogenesis. It functions in the pathway carbohydrate degradation; glycolysis; D-glyceraldehyde 3-phosphate and glycerone phosphate from D-glucose: step 2/4. Its function is as follows. Catalyzes the reversible isomerization of glucose-6-phosphate to fructose-6-phosphate. This Rhizobium rhizogenes (strain K84 / ATCC BAA-868) (Agrobacterium radiobacter) protein is Glucose-6-phosphate isomerase.